The chain runs to 126 residues: Prostate and testis expressed protein 1 (126 aa).

Positions 1-21 (MDKSLLLELPILLCCFRALSG) are cleaved as a signal peptide. A UPAR/Ly6 domain is found at 46–125 (VQCRMCHLQF…CRSHDLCNED (80 aa)). 4 disulfides stabilise this stretch: C48–C75, C51–C60, C67–C94, and C98–C115.

This sequence belongs to the PATE family. As to expression, expressed specifically in prostate cancer, normal prostate, and testis. Expressed in the epithelial cells of the prostate cancer and normal prostate tissues.

Its subcellular location is the secreted. The protein is Prostate and testis expressed protein 1 (PATE1) of Homo sapiens (Human).